The sequence spans 323 residues: Magnesium transporter NIPA1 (323 aa).

Residues 1–21 (MGTAAAAAAAGEGARGPSPAA) are Extracellular-facing. A helical transmembrane segment spans residues 22-42 (VSLGLGVAVVSSLVNGSTFVL). Residues 43-60 (QKKGIVRAKRRGTSYLTD) lie on the Cytoplasmic side of the membrane. Residues 61–81 (IVWWAGTIAMAVGQIGNFLAY) form a helical membrane-spanning segment. Position 82 (threonine 82) is a topological domain, extracellular. The helical transmembrane segment at 83 to 103 (AVPTVLVTPLGALGVPFGSIL) threads the bilayer. The Cytoplasmic portion of the chain corresponds to 104–111 (ASYLLKEK). The helical transmembrane segment at 112-132 (LNILGKLGCLLSCAGSVVLII) threads the bilayer. Over 133-153 (HSPKSESVTTQAELEEKLTNP) the chain is Extracellular. A helical transmembrane segment spans residues 154-174 (VFVGYLCIVLLMLLLLIFWIA). Topologically, residues 175-177 (PAH) are cytoplasmic. The helical transmembrane segment at 178-198 (GPTNIMVYISICSLLGSFTVP) threads the bilayer. Residues 199–218 (STKGIGLAAQDILHNNPSSQ) are Extracellular-facing. The helical transmembrane segment at 219–239 (RALCLCLVLLAVLGCSIIVQF) threads the bilayer. Over 240-253 (RYINKALECFDSSV) the chain is Cytoplasmic. A helical transmembrane segment spans residues 254-274 (FGAIYYVVFTTLVLLASAILF). Over 275-284 (REWSNVGLVD) the chain is Extracellular. Residues 285–305 (FLGMACGFTTVSVGIVLIQVF) form a helical membrane-spanning segment. Residues 306 to 323 (KEFNFNLGEMNKSNMKTD) are Cytoplasmic-facing.

It belongs to the NIPA family. Homodimer. Widely expressed. Predominantly expressed in neuronal tissues. Brain, heart, kidney, liver and colon (at protein level).

It is found in the cell membrane. It localises to the early endosome. It carries out the reaction Mg(2+)(in) = Mg(2+)(out). Its function is as follows. Acts as a Mg(2+) transporter. Can also transport other divalent cations such as Fe(2+), Sr(2+), Ba(2+), Zn(2+) and Co(2+) but to a much less extent than Mg(2+). The chain is Magnesium transporter NIPA1 (Nipa1) from Mus musculus (Mouse).